We begin with the raw amino-acid sequence, 310 residues long: Cytochrome f (310 aa).

A signal peptide spans 1–23; it reads MRRLIPILLGSLVLSLSILVAPA. Positions 28, 48, 51, and 52 each coordinate heme. A helical transmembrane segment spans residues 277–297; it reads IYGLLAFFVAVSLAQILLVLK.

This sequence belongs to the cytochrome f family. In terms of assembly, the 4 large subunits of the cytochrome b6-f complex are cytochrome b6, subunit IV (17 kDa polypeptide, PetD), cytochrome f and the Rieske protein, while the 4 small subunits are PetG, PetL, PetM and PetN. The complex functions as a dimer. The cofactor is heme.

The protein resides in the cellular thylakoid membrane. Its function is as follows. Component of the cytochrome b6-f complex, which mediates electron transfer between photosystem II (PSII) and photosystem I (PSI), cyclic electron flow around PSI, and state transitions. The polypeptide is Cytochrome f (Prochlorococcus marinus (strain MIT 9303)).